The primary structure comprises 320 residues: Lipoyl synthase (320 aa).

The [4Fe-4S] cluster site is built by C67, C72, C78, C93, C97, C100, and S307. One can recognise a Radical SAM core domain in the interval 79 to 296 (FNHGTATFMI…RDKANEMGFE (218 aa)).

The protein belongs to the radical SAM superfamily. Lipoyl synthase family. It depends on [4Fe-4S] cluster as a cofactor.

The protein localises to the cytoplasm. The catalysed reaction is [[Fe-S] cluster scaffold protein carrying a second [4Fe-4S](2+) cluster] + N(6)-octanoyl-L-lysyl-[protein] + 2 oxidized [2Fe-2S]-[ferredoxin] + 2 S-adenosyl-L-methionine + 4 H(+) = [[Fe-S] cluster scaffold protein] + N(6)-[(R)-dihydrolipoyl]-L-lysyl-[protein] + 4 Fe(3+) + 2 hydrogen sulfide + 2 5'-deoxyadenosine + 2 L-methionine + 2 reduced [2Fe-2S]-[ferredoxin]. It participates in protein modification; protein lipoylation via endogenous pathway; protein N(6)-(lipoyl)lysine from octanoyl-[acyl-carrier-protein]: step 2/2. Catalyzes the radical-mediated insertion of two sulfur atoms into the C-6 and C-8 positions of the octanoyl moiety bound to the lipoyl domains of lipoate-dependent enzymes, thereby converting the octanoylated domains into lipoylated derivatives. The polypeptide is Lipoyl synthase (Haemophilus influenzae (strain PittGG)).